The primary structure comprises 623 residues: Adenine deaminase 2 (623 aa).

Belongs to the metallo-dependent hydrolases superfamily. Adenine deaminase family. Mn(2+) serves as cofactor.

It catalyses the reaction adenine + H2O + H(+) = hypoxanthine + NH4(+). The protein is Adenine deaminase 2 of Jannaschia sp. (strain CCS1).